The following is a 527-amino-acid chain: GMP synthase [glutamine-hydrolyzing] (527 aa).

In terms of domain architecture, Glutamine amidotransferase type-1 spans 11–209; that stretch reads RILILDFGSQ…VLNICGCENL (199 aa). Cysteine 88 acts as the Nucleophile in catalysis. Catalysis depends on residues histidine 183 and glutamate 185. The GMPS ATP-PPase domain maps to 210 to 402; the sequence is WTSANIIEDA…LGLPYNMLYR (193 aa). 237-243 serves as a coordination point for ATP; that stretch reads SGGVDSS.

As to quaternary structure, homodimer.

The enzyme catalyses XMP + L-glutamine + ATP + H2O = GMP + L-glutamate + AMP + diphosphate + 2 H(+). It participates in purine metabolism; GMP biosynthesis; GMP from XMP (L-Gln route): step 1/1. Catalyzes the synthesis of GMP from XMP. The polypeptide is GMP synthase [glutamine-hydrolyzing] (Photobacterium profundum (strain SS9)).